A 208-amino-acid polypeptide reads, in one-letter code: Outer-membrane lipoprotein carrier protein (208 aa).

Residues 1-21 (MRLIRTLFVAALAMGTSLAHA) form the signal peptide.

It belongs to the LolA family. As to quaternary structure, monomer.

It localises to the periplasm. Participates in the translocation of lipoproteins from the inner membrane to the outer membrane. Only forms a complex with a lipoprotein if the residue after the N-terminal Cys is not an aspartate (The Asp acts as a targeting signal to indicate that the lipoprotein should stay in the inner membrane). This Pseudomonas paraeruginosa (strain DSM 24068 / PA7) (Pseudomonas aeruginosa (strain PA7)) protein is Outer-membrane lipoprotein carrier protein.